The sequence spans 447 residues: Trigger factor (447 aa).

The PPIase FKBP-type domain maps to 188–273 (GDKLVIDFEG…VNDIQVAEDF (86 aa)).

Belongs to the FKBP-type PPIase family. Tig subfamily.

The protein resides in the cytoplasm. The catalysed reaction is [protein]-peptidylproline (omega=180) = [protein]-peptidylproline (omega=0). Functionally, involved in protein export. Acts as a chaperone by maintaining the newly synthesized protein in an open conformation. Functions as a peptidyl-prolyl cis-trans isomerase. The polypeptide is Trigger factor (Wolbachia sp. subsp. Brugia malayi (strain TRS)).